A 398-amino-acid chain; its full sequence is Bone morphogenetic protein 2-A (398 aa).

An N-terminal signal peptide occupies residues 1–23 (MVAGIHSLLLLLFYQVLLSGCTG). A propeptide spanning residues 24-284 (LIPEEGKRKY…GHALHKRQKR (261 aa)) is cleaved from the precursor. N-linked (GlcNAc...) asparagine glycans are attached at residues asparagine 137, asparagine 202, and asparagine 340. 3 disulfides stabilise this stretch: cysteine 298-cysteine 363, cysteine 327-cysteine 395, and cysteine 331-cysteine 397.

It belongs to the TGF-beta family. As to quaternary structure, homodimer; disulfide-linked.

It is found in the secreted. Its function is as follows. Induces cartilage and bone formation. The sequence is that of Bone morphogenetic protein 2-A (bmp2-a) from Xenopus laevis (African clawed frog).